The primary structure comprises 175 residues: Large ribosomal subunit protein uL10 (175 aa).

Belongs to the universal ribosomal protein uL10 family. In terms of assembly, part of the ribosomal stalk of the 50S ribosomal subunit. The N-terminus interacts with L11 and the large rRNA to form the base of the stalk. The C-terminus forms an elongated spine to which L12 dimers bind in a sequential fashion forming a multimeric L10(L12)X complex.

Its function is as follows. Forms part of the ribosomal stalk, playing a central role in the interaction of the ribosome with GTP-bound translation factors. The chain is Large ribosomal subunit protein uL10 from Xylella fastidiosa (strain M23).